We begin with the raw amino-acid sequence, 397 residues long: Lysophospholipid transporter LplT (397 aa).

The next 11 membrane-spanning stretches (helical) occupy residues 16–36, 53–73, 91–111, 139–159, 164–184, 227–247, 253–273, 281–301, 305–325, 352–372, and 373–393; these read MLAVICAQFLSAFGDNALLFA, VLQMLFVGAYILFAPFVGQFA, LGAGCICFGVNPFIGYTLVGI, LMESSTIAAILLGSMAGGILA, LAALIVCALVYGGAVVANLWI, LFWGAGVTLRFLLVIWVPVAL, AMPTYLNAMVAVGIVLGAGAA, TVSRCMPAGILIGIAVMAFAV, LLPAFGLLLLLGVFGGFFIVP, NVAMLLMLGLYSLAVSVGVPP, and VAVGIGFGAVFAVAIAALWVW.

Belongs to the major facilitator superfamily. LplT (TC 2.A.1.42) family.

It localises to the cell inner membrane. In terms of biological role, catalyzes the facilitated diffusion of 2-acyl-glycero-3-phosphoethanolamine (2-acyl-GPE) into the cell. The sequence is that of Lysophospholipid transporter LplT from Klebsiella pneumoniae (strain 342).